We begin with the raw amino-acid sequence, 53 residues long: UPF0181 protein VC_A0569 (53 aa).

The protein belongs to the UPF0181 family.

The polypeptide is UPF0181 protein VC_A0569 (Vibrio cholerae serotype O1 (strain ATCC 39315 / El Tor Inaba N16961)).